The sequence spans 94 residues: Small ribosomal subunit protein bS18 (94 aa).

Residues 1–12 (MSEQNSRPQNSE) are compositionally biased toward low complexity. The segment at 1–29 (MSEQNSRPQNSERPQRSRRPQGGPRRRRK) is disordered. Over residues 16–29 (RSRRPQGGPRRRRK) the composition is skewed to basic residues.

This sequence belongs to the bacterial ribosomal protein bS18 family. As to quaternary structure, part of the 30S ribosomal subunit. Forms a tight heterodimer with protein bS6.

Binds as a heterodimer with protein bS6 to the central domain of the 16S rRNA, where it helps stabilize the platform of the 30S subunit. The polypeptide is Small ribosomal subunit protein bS18 (Leuconostoc citreum (strain KM20)).